A 345-amino-acid chain; its full sequence is G-protein coupled receptor str-33 (345 aa).

Residues 1–11 lie on the Extracellular side of the membrane; it reads MTVNLRDLSRT. A helical membrane pass occupies residues 12–32; it reads IAEFAFLTALVCNSLLIYLTA. Over 33–37 the chain is Cytoplasmic; the sequence is RRTKN. A helical membrane pass occupies residues 38–58; sequence ITGAYKYMIILFALLGLIFSC. At 59 to 92 the chain is on the extracellular side; sequence TEMLARPFVHNFNASFVYFSLSNDLSEFKSLVQM. N-linked (GlcNAc...) asparagine glycosylation occurs at Asn71. A helical membrane pass occupies residues 93–113; it reads LLVLYSGLYSSLISFVAVQFI. Over 114–133 the chain is Cytoplasmic; it reads YRYMVLVNANLLESWFTGWK. Residues 134 to 154 traverse the membrane as a helical segment; sequence LVFWVFYVIFFGFAWSASVYF. The Extracellular portion of the chain corresponds to 155–204; sequence CLFPDTYSYNYIRTEFKDVYNIGVDRVAIFILVAYEKHPSSEEYKLRPAS. Residues 205–225 form a helical membrane-spanning segment; it reads VIMIAGTISILVIQYSIMLFC. The Cytoplasmic portion of the chain corresponds to 226–258; it reads GASMHRQMNEKLKNFSPDNQRLQKQFFKTLLLQ. The chain crosses the membrane as a helical span at residues 259–279; that stretch reads ISVPTVLFHMPIFPVLLGPFF. Over 280–288 the chain is Extracellular; sequence NFEISAESG. A helical transmembrane segment spans residues 289 to 309; that stretch reads IIYSLFSLYPPIDGLIIMTVV. The Cytoplasmic segment spans residues 310–345; sequence TDYRIALTELFLGSHSGAQVEVIPVEVVSILNFSLL.

The protein belongs to the nematode receptor-like protein str family. Detected in ALM and PLM mechanosensory neurons and head neurons.

Its subcellular location is the cell membrane. Functionally, regulates egg-laying and locomotion. Likely to act upstream of goa-1 to suppress 5-hydroxytryptamine (5-HT) biosynthesis in hermaphrodite-specific neurons (HSNs) through inhibition of tph-1 transcription. This chain is G-protein coupled receptor str-33, found in Caenorhabditis elegans.